The following is a 187-amino-acid chain: Elongation factor P (187 aa).

It belongs to the elongation factor P family.

It localises to the cytoplasm. It functions in the pathway protein biosynthesis; polypeptide chain elongation. Involved in peptide bond synthesis. Stimulates efficient translation and peptide-bond synthesis on native or reconstituted 70S ribosomes in vitro. Probably functions indirectly by altering the affinity of the ribosome for aminoacyl-tRNA, thus increasing their reactivity as acceptors for peptidyl transferase. This is Elongation factor P from Desulfotalea psychrophila (strain LSv54 / DSM 12343).